The primary structure comprises 680 residues: Oligopeptidase A (680 aa).

Position 469 (His469) interacts with Zn(2+). The active site involves Glu470. Zn(2+) contacts are provided by His473 and His476.

This sequence belongs to the peptidase M3 family. Requires Zn(2+) as cofactor.

It catalyses the reaction Hydrolysis of oligopeptides, with broad specificity. Gly or Ala commonly occur as P1 or P1' residues, but more distant residues are also important, as is shown by the fact that Z-Gly-Pro-Gly-|-Gly-Pro-Ala is cleaved, but not Z-(Gly)(5).. Its function is as follows. May play a specific role in the degradation of signal peptides after they are released from precursor forms of secreted proteins. Can cleave N-acetyl-L-Ala(4). This is Oligopeptidase A (prlC) from Salmonella typhimurium (strain LT2 / SGSC1412 / ATCC 700720).